The chain runs to 257 residues: Hydroxyacylglutathione hydrolase (257 aa).

Zn(2+) contacts are provided by His54, His56, Asp58, His59, His113, Asp137, and His175.

This sequence belongs to the metallo-beta-lactamase superfamily. Glyoxalase II family. As to quaternary structure, monomer. The cofactor is Zn(2+).

The enzyme catalyses an S-(2-hydroxyacyl)glutathione + H2O = a 2-hydroxy carboxylate + glutathione + H(+). Its pathway is secondary metabolite metabolism; methylglyoxal degradation; (R)-lactate from methylglyoxal: step 2/2. Its function is as follows. Thiolesterase that catalyzes the hydrolysis of S-D-lactoyl-glutathione to form glutathione and D-lactic acid. The polypeptide is Hydroxyacylglutathione hydrolase (Rippkaea orientalis (strain PCC 8801 / RF-1) (Cyanothece sp. (strain PCC 8801))).